An 82-amino-acid chain; its full sequence is Large ribosomal subunit protein bL31B (82 aa).

It belongs to the bacterial ribosomal protein bL31 family. Type B subfamily. As to quaternary structure, part of the 50S ribosomal subunit.

This is Large ribosomal subunit protein bL31B from Pectobacterium atrosepticum (strain SCRI 1043 / ATCC BAA-672) (Erwinia carotovora subsp. atroseptica).